A 93-amino-acid chain; its full sequence is Protamine-3 (93 aa).

The disordered stretch occupies residues 1 to 93 (MGSRCAKLGT…QSPEPKQTRS (93 aa)). Over residues 37–57 (EGEEEEEGEEEEEEEGEEEEL) the composition is skewed to acidic residues. Over residues 81-93 (EVQQSPEPKQTRS) the composition is skewed to polar residues. Ser-85 is modified (phosphoserine).

It belongs to the protamine P3 family.

The protein resides in the nucleus. It is found in the chromosome. Protamines substitute for histones in the chromatin of sperm during the haploid phase of spermatogenesis. They compact sperm DNA into a highly condensed, stable and inactive complex. In Bos taurus (Bovine), this protein is Protamine-3 (PRM3).